The chain runs to 506 residues: Nostrin (506 aa).

In terms of domain architecture, F-BAR spans 1–260; sequence MRDPLTDCSY…AISKVDVEKD (260 aa). Serine 114 carries the phosphoserine modification. Coiled-coil stretches lie at residues 160-230 and 305-334; these read SLTQ…LNQY and KLGRLQRDIEKASRDKEGLERKLKALASSS. The 81-residue stretch at 292-372 folds into the REM-1 domain; the sequence is PMDKERRKSL…SYKLSSVLAD (81 aa). The disordered stretch occupies residues 413–435; it reads KAESKAPAGGQNNPSSSPSGSTV. Positions 419-435 are enriched in low complexity; it reads PAGGQNNPSSSPSGSTV. The 60-residue stretch at 438–497 folds into the SH3 domain; sequence ASKHLCKALYTFQARQDDELNLEKGDIVTVHEKKEEGWWFGSLKGKRGHFPAAYVEELPP. Serine 479 bears the Phosphoserine mark.

In terms of assembly, homotrimer. Interacts with NOS3, DNM2, WASL and CAV1. Interacts with DAB2. Interacts (via SH3 domain) with DNM2; this interaction allows the recruitment of NOS3 to dynamin-positive structures.

Its subcellular location is the cell membrane. It is found in the cytoplasmic vesicle. The protein resides in the cytoplasm. The protein localises to the cytoskeleton. It localises to the nucleus. Its function is as follows. Multivalent adapter protein which may decrease NOS3 activity by inducing its translocation away from the plasma membrane. This Mus musculus (Mouse) protein is Nostrin.